The following is a 613-amino-acid chain: Ribosome-associated molecular chaperone SSB1 (613 aa).

N-acetylalanine is present on alanine 2. The interval 2-391 is nucleotide binding domain (NBD); that stretch reads AEGVFQGAIG…ILTGQSTSDE (390 aa). 16–18 lines the ATP pocket; that stretch reads TTY. Threonine 47 is subject to Phosphothreonine. ATP-binding positions include lysine 73, 205–207, 271–278, and glycine 342; these read GGT and ERAKRTLS. Residues 392-402 form an inter-domain linker region; the sequence is TKDLLLLDVAP. Residues 403 to 613 form a substrate binding domain (SBD) region; sequence LSLGVGMQGD…RVVTKAMSSR (211 aa). A Contributes to ribosome binding motif is present at residues 428–430; that stretch reads KRR. Position 431 is a phosphothreonine (threonine 431). Residues 516 to 612 form a lid domain (SBDalpha) region; sequence SEEIEKMVNQ…KRVVTKAMSS (97 aa). The short motif at 574–582 is the Nuclear export signal element; the sequence is IEAALSDAL. A required for interaction with ribosomes region spans residues 601 to 613; the sequence is GLKRVVTKAMSSR.

This sequence belongs to the heat shock protein 70 family. Ssb-type Hsp70 subfamily. As to quaternary structure, binds to ribosomes. Binds close to the ribosomal tunnel exit via contacts with both ribosomal proteins RPL35, RPL39 and RPL19, and rRNA. Directly interacts with nascent polypeptides. This interaction is dependent on the ribosome-associated complex (RAC). Interacts with SSE1. Interacts with FES1. Interacts with NAP1.

The protein localises to the cytoplasm. It catalyses the reaction ATP + H2O = ADP + phosphate + H(+). Ribosome-bound, Hsp70-type chaperone that assists in the cotranslational folding of newly synthesized proteins in the cytosol. Stimulates folding by interacting with nascent chains, binding to short, largely hydrophobic sequences exposed by unfolded proteins, thereby stabilizing longer, more slowly translated, and aggregation-prone nascent polypeptides and domains that cannot fold stably until fully synthesized. The Hsp70-protein substrate interaction depends on ATP-binding and on allosteric regulation between the NBD and the SBD. The ATP-bound state is characterized by a fast exchange rate of substrate (low affinity state), while in the ADP-bound state exchange is much slower (high affinity state). During the Hsp70 cycle, the chaperone switches between the ATP-bound state (open conformation) and the ADP-bound state (closed conformation) by major conformational rearrangements involving mainly the lid domain. Ssb cooperates with a specific Hsp40/Hsp70 co-chaperone termed the ribosome-associated complex (RAC), which stimulates the ATPase activity of the ribosome-associated pool of Ssbs and switches it to the high affinity substrate binding state. Hsp110 chaperone SSE1 and FES1 act as nucleotide exchange factors that cause substrate release. This Saccharomyces cerevisiae (strain ATCC 204508 / S288c) (Baker's yeast) protein is Ribosome-associated molecular chaperone SSB1.